The chain runs to 382 residues: Alkaline serine protease ver112 (382 aa).

Residues 1–15 (MRLSIIAAVLPLALA) form the signal peptide. The propeptide occupies 16 to 102 (APVAEPEIAP…IEQDAIFSIN (87 aa)). The region spanning 56-99 (SKIPGIERVYENVLNGFSATLSNEELERLRRDPDVESIEQDAIF) is the Inhibitor I9 domain. A Peptidase S8 domain is found at 111–382 (TWGLTRISHR…VNYLAFNGAT (272 aa)). 2 disulfide bridges follow: C138-C227 and C282-C353. Residues D143, H173, and S328 each act as charge relay system in the active site.

The protein belongs to the peptidase S8 family.

Its subcellular location is the secreted. Inhibited by phenylmethylsulfonyl fluoride (PMSF). Functionally, serine protease which can degrade the nematode cuticle. This chain is Alkaline serine protease ver112, found in Corniculantispora psalliotae (Lecanicillium psalliotae).